The sequence spans 280 residues: Vitamin B12-binding protein (280 aa).

Positions 1–27 are cleaved as a signal peptide; sequence MMPLGLFPLPRAAAVLLISLLTLPAQA. Residues 30 to 277 form the Fe/B12 periplasmic-binding domain; the sequence is RVISLSPSTT…QMASIPTPVA (248 aa). Tyrosine 57 serves as a coordination point for cyanocob(III)alamin. A disulfide bond links cysteine 190 and cysteine 266.

Belongs to the BtuF family. In terms of assembly, the complex is composed of two ATP-binding proteins (BtuD), two transmembrane proteins (BtuC) and a solute-binding protein (BtuF).

The protein resides in the periplasm. In terms of biological role, part of the ABC transporter complex BtuCDF involved in vitamin B12 import. Binds vitamin B12 and delivers it to the periplasmic surface of BtuC. This chain is Vitamin B12-binding protein, found in Yersinia pseudotuberculosis serotype O:3 (strain YPIII).